A 293-amino-acid polypeptide reads, in one-letter code: Small ribosomal subunit protein uS2 (293 aa).

The segment at 219–293 (IASAKPDEPY…WATPKTEDWA (75 aa)) is disordered.

Belongs to the universal ribosomal protein uS2 family. In terms of assembly, component of the small ribosomal subunit. Mature ribosomes consist of a small (40S) and a large (60S) subunit. The 40S subunit contains about 33 different proteins and 1 molecule of RNA (18S). The 60S subunit contains about 49 different proteins and 3 molecules of RNA (28S, 5.8S and 5S). Interacts with ribosomal protein S21.

It localises to the cytoplasm. In terms of biological role, required for the assembly and/or stability of the 40S ribosomal subunit. Required for the processing of the 20S rRNA-precursor to mature 18S rRNA in a late step of the maturation of 40S ribosomal subunits. This is Small ribosomal subunit protein uS2 from Hydra viridissima (Green hydra).